Reading from the N-terminus, the 484-residue chain is Deoxyribodipyrimidine photo-lyase (484 aa).

The 130-residue stretch at Ala3 to Leu132 folds into the Photolyase/cryptochrome alpha/beta domain. Coenzyme F420-(gamma-Glu)n-binding positions include Cys36–Asp38, Arg51, and Asp101–Arg109. The interval Gly141–Val148 is DNA-binding. Residue Tyr228 participates in FAD binding. Arg232 contributes to the DNA binding site. Thr240–Leu247 provides a ligand contact to FAD. Lys248 lines the coenzyme F420-(gamma-Glu)n pocket. 2 interaction with DNA regions span residues Glu283–Tyr290 and Asn349–Arg350. FAD-binding positions include Trp346–Trp352, Asp380–Asp382, and Asn386. Gln411 and Lys472 together coordinate DNA.

This sequence belongs to the DNA photolyase class-1 family. As to quaternary structure, monomer. It depends on FAD as a cofactor. Requires coenzyme F420-(gamma-Glu)n as cofactor.

The catalysed reaction is cyclobutadipyrimidine (in DNA) = 2 pyrimidine residues (in DNA).. In terms of biological role, involved in repair of UV radiation-induced DNA damage. Catalyzes the light-dependent monomerization (300-600 nm) of cyclobutyl pyrimidine dimers (in cis-syn configuration), which are formed between adjacent bases on the same DNA strand upon exposure to ultraviolet radiation. This chain is Deoxyribodipyrimidine photo-lyase (phr), found in Synechococcus sp. (strain ATCC 27144 / PCC 6301 / SAUG 1402/1) (Anacystis nidulans).